The primary structure comprises 363 residues: Cleavage and termination factor 1 (363 aa).

The RRM domain occupies 7 to 85; it reads NVVFVGNIPY…RKIRVEFPSN (79 aa). The tract at residues 291–325 is disordered; the sequence is QPASATSSPPSVPQKIPSSNHKSQQANGSDQGNEG. Residues 306 to 322 show a composition bias toward polar residues; sequence IPSSNHKSQQANGSDQG.

As to quaternary structure, interacts with res2.

It is found in the nucleus. Component of the cleavage factor I (CF I) involved in pre-mRNA 3'-end processing. The protein is Cleavage and termination factor 1 (ctf1) of Schizosaccharomyces pombe (strain 972 / ATCC 24843) (Fission yeast).